The sequence spans 118 residues: Small ribosomal subunit protein uS13 (118 aa).

Residues 94-118 (SLPLRGQRTKTNARTRKGPRKPIRK) are disordered.

The protein belongs to the universal ribosomal protein uS13 family. Part of the 30S ribosomal subunit. Forms a loose heterodimer with protein S19. Forms two bridges to the 50S subunit in the 70S ribosome.

In terms of biological role, located at the top of the head of the 30S subunit, it contacts several helices of the 16S rRNA. In the 70S ribosome it contacts the 23S rRNA (bridge B1a) and protein L5 of the 50S subunit (bridge B1b), connecting the 2 subunits; these bridges are implicated in subunit movement. Contacts the tRNAs in the A and P-sites. The sequence is that of Small ribosomal subunit protein uS13 from Shewanella sediminis (strain HAW-EB3).